The chain runs to 205 residues: Pyridoxal 5'-phosphate synthase subunit PdxT (205 aa).

52–54 is an L-glutamine binding site; it reads GES. The Nucleophile role is filled by Cys84. L-glutamine-binding positions include Arg116 and 145 to 146; that span reads IR. Active-site charge relay system residues include His185 and Glu187.

This sequence belongs to the glutaminase PdxT/SNO family. As to quaternary structure, in the presence of PdxS, forms a dodecamer of heterodimers. Only shows activity in the heterodimer.

The catalysed reaction is aldehydo-D-ribose 5-phosphate + D-glyceraldehyde 3-phosphate + L-glutamine = pyridoxal 5'-phosphate + L-glutamate + phosphate + 3 H2O + H(+). It carries out the reaction L-glutamine + H2O = L-glutamate + NH4(+). It functions in the pathway cofactor biosynthesis; pyridoxal 5'-phosphate biosynthesis. Catalyzes the hydrolysis of glutamine to glutamate and ammonia as part of the biosynthesis of pyridoxal 5'-phosphate. The resulting ammonia molecule is channeled to the active site of PdxS. The polypeptide is Pyridoxal 5'-phosphate synthase subunit PdxT (Staphylothermus marinus (strain ATCC 43588 / DSM 3639 / JCM 9404 / F1)).